Here is a 209-residue protein sequence, read N- to C-terminus: Tektin bundle-interacting protein 1 (209 aa).

As to quaternary structure, microtubule inner protein component of sperm flagellar doublet microtubules.

It localises to the cytoplasm. The protein localises to the cytoskeleton. The protein resides in the cilium axoneme. Its subcellular location is the flagellum axoneme. Its function is as follows. Microtubule inner protein (MIP) part of the dynein-decorated doublet microtubules (DMTs) in cilia axoneme, which is required for motile cilia beating. Located at the center of the tektin bundle where may function to recruit tektins or stabilize the bundle. The chain is Tektin bundle-interacting protein 1 (TEKTIP1) from Macaca fascicularis (Crab-eating macaque).